The primary structure comprises 679 residues: DNA ligase (679 aa).

NAD(+) contacts are provided by residues aspartate 36 to aspartate 40 and serine 94 to leucine 95. Lysine 126 (N6-AMP-lysine intermediate) is an active-site residue. NAD(+) contacts are provided by arginine 147, glutamate 181, lysine 299, and lysine 323. 4 residues coordinate Zn(2+): cysteine 415, cysteine 418, cysteine 433, and cysteine 438. Positions isoleucine 603–glutamate 679 constitute a BRCT domain.

The protein belongs to the NAD-dependent DNA ligase family. LigA subfamily. The cofactor is Mg(2+). Requires Mn(2+) as cofactor.

It catalyses the reaction NAD(+) + (deoxyribonucleotide)n-3'-hydroxyl + 5'-phospho-(deoxyribonucleotide)m = (deoxyribonucleotide)n+m + AMP + beta-nicotinamide D-nucleotide.. Functionally, DNA ligase that catalyzes the formation of phosphodiester linkages between 5'-phosphoryl and 3'-hydroxyl groups in double-stranded DNA using NAD as a coenzyme and as the energy source for the reaction. It is essential for DNA replication and repair of damaged DNA. The polypeptide is DNA ligase (Mycoplasmopsis pulmonis (strain UAB CTIP) (Mycoplasma pulmonis)).